The primary structure comprises 479 residues: U6 small nuclear RNA (adenine-(43)-N(6))-methyltransferase (479 aa).

Lys-82, Gly-108, Asp-131, Thr-164, and Asn-184 together coordinate S-adenosyl-L-methionine. The involved in dlc-1 binding stretch occupies residues 420–424 (DNASQ).

The protein belongs to the methyltransferase superfamily. METTL16/RlmF family. In terms of assembly, self-associates. Interacts with dlc-1; the interaction is direct, and is required for nuclear localization of mett-10. Expressed in the intestine, vulva, and cells of the somatic gonad including distal tip cells, gonadal sheath cells and spermatheca.

The protein localises to the nucleus. It carries out the reaction an adenosine in mRNA + S-adenosyl-L-methionine = an N(6)-methyladenosine in mRNA + S-adenosyl-L-homocysteine + H(+). The catalysed reaction is adenosine in U6 snRNA + S-adenosyl-L-methionine = N(6)-methyladenosine in U6 snRNA + S-adenosyl-L-homocysteine + H(+). In terms of biological role, RNA N6-methyltransferase that methylates adenosine residues at the N(6) position of a subset of RNAs and is involved in S-adenosyl-L-methionine homeostasis by regulating splicing of S-adenosylmethionine synthase transcripts (sams-3, sams-4 and sams-5). Able to N6-methylate a subset of mRNAs containing the 5'UACAGAAAC-3' nonamer sequence. Plays a key role in S-adenosyl-L-methionine homeostasis: under rich-diet conditions, catalyzes N6-methylation of S-adenosylmethionine synthase mRNAs (sams-3, sams-4 and sams-5), directly inhibiting splicing and protein production of S-adenosylmethionine synthase. In addition to mRNAs, also able to mediate N6-methylation of U6 small nuclear RNA (U6 snRNA). Required for gamete production, inhibiting germ cell proliferative fate and ensuring germ cell meiotic development. Also promotes progression of the mitotic cell cycle in those germ cells that continue to proliferate. Plays a role in the development of the vulva, somatic gonad and embryo. This is U6 small nuclear RNA (adenine-(43)-N(6))-methyltransferase from Caenorhabditis elegans.